We begin with the raw amino-acid sequence, 197 residues long: Adenylate kinase isoenzyme 6 homolog FAP7 (197 aa).

ATP-binding residues include glycine 17, glycine 19, lysine 20, serine 21, and serine 22. Residues 38–61 form an NMPbind region; that stretch reads NISDFAKDNDCFEGYDEGRKSHIV. An LID region spans residues 113-123; it reads ARGYHDSKIEE. Arginine 114 serves as a coordination point for ATP. A disordered region spans residues 176–197; that stretch reads PDGVTNEYQGPRSDDEDDEDSE. Position 183 is a phosphotyrosine (tyrosine 183). Serine 188 and serine 196 each carry phosphoserine.

Belongs to the adenylate kinase family. AK6 subfamily. Interacts with small ribosomal subunit protein uS11B/RPS14B. Not a structural component of 43S pre-ribosomes, but transiently interacts with them by binding to uS11/RPS14.

The protein localises to the cytoplasm. It is found in the nucleus. The enzyme catalyses AMP + ATP = 2 ADP. It catalyses the reaction ATP + H2O = ADP + phosphate + H(+). Its function is as follows. Broad-specificity nucleoside monophosphate (NMP) kinase that catalyzes the reversible transfer of the terminal phosphate group between nucleoside triphosphates and monophosphates. Also has ATPase activity. Involved in the late cytoplasmic maturation steps of the 40S ribosomal particles, specifically 18S rRNA maturation. Required for cleavage of the 20S pre-rRNA at site D in the cytoplasm. While NMP activity is not required for ribosome maturation, ATPase activity is. Associates transiently with small ribosomal subunit protein uS11. ATP hydrolysis breaks the interaction with uS11. May temporarily remove uS11 from the ribosome to enable a conformational change of the ribosomal RNA that is needed for the final maturation step of the small ribosomal subunit. Promotes formation of the rotated state in 80S-like ribosomes, a key intermediate in translocation, thereby releasing the essential assembly factor DIM1 from pre-40S subunits. Its NMP activity may have a role in nuclear energy homeostasis. Involved in oxidative stress response. Required for POS9-dependent target gene transcription upon oxidative stress. This Saccharomyces cerevisiae (strain ATCC 204508 / S288c) (Baker's yeast) protein is Adenylate kinase isoenzyme 6 homolog FAP7.